A 200-amino-acid chain; its full sequence is Ribonuclease HII (200 aa).

The 187-residue stretch at 14–200 (SRLAGVDEVG…FAPVKQWQLL (187 aa)) folds into the RNase H type-2 domain. A divalent metal cation is bound by residues Asp-20, Glu-21, and Asp-112.

Belongs to the RNase HII family. It depends on Mn(2+) as a cofactor. Requires Mg(2+) as cofactor.

It is found in the cytoplasm. It catalyses the reaction Endonucleolytic cleavage to 5'-phosphomonoester.. In terms of biological role, endonuclease that specifically degrades the RNA of RNA-DNA hybrids. In Chromohalobacter salexigens (strain ATCC BAA-138 / DSM 3043 / CIP 106854 / NCIMB 13768 / 1H11), this protein is Ribonuclease HII.